Here is a 433-residue protein sequence, read N- to C-terminus: MTERRHDREFVRTFFTSPTAVEGEDDSAKMLRRAAGLRGMQAPDVWVPDNEDATAPSMRDEGAENIVEVISEQGAEFPGEIHPRMVWHRDSPETRYQGFQHMLDITDPERGAVEHIHGFVIPEVGGIDDWKKADEFFTIVEHEHGLDEGSLAMSVIIESGEAELAMGDLRDEMGKPTNNLERLFLLVDGEVDYTKDMRAMTPTGELPAWPELRHNTSRGASAAGCVAVDGPYDDIRDVEGYRERMTDNQAKGMLGIWSLTPGQVVEANTSPLPPKTGSWLLDADGEEVELASEDGVEAYDGDRLSLEATDGGYELRVGGDARELTADELREELLGLTSYVPSMDDIVDSMEEFEAAKEAGRGAIAMTQSATLRIGGTEIDIEKDRMWDEATYQAAMTPISLFQDVYENRPDQHEELEERYGAGVVERAMEVGL.

16-17 is an acetyl-CoA binding site; it reads TS. Mg(2+) is bound at residue Asp52. Arg84 contributes to the acetyl-CoA binding site. Residues Arg84, Glu158, and 191–192 each bind glyoxylate; that span reads VD. Mg(2+) is bound by residues Glu158 and Asp192. Acetyl-CoA is bound by residues Arg236 and Leu259. The active-site Proton acceptor is the Asp388.

The protein belongs to the HpcH/HpaI aldolase family. Homotrimer and homohexamer in equilibrium. The cofactor is Mg(2+).

The protein resides in the cytoplasm. It carries out the reaction glyoxylate + acetyl-CoA + H2O = (S)-malate + CoA + H(+). It functions in the pathway carbohydrate metabolism; glyoxylate cycle; (S)-malate from isocitrate: step 2/2. In terms of biological role, involved in the glyoxylate cycle which synthesizes precursors for carbohydrates from C2 compounds such as acetate. Catalyzes the Claisen condensation between acetyl-coenzyme A (acetyl-CoA) and glyoxylate to form the malyl-CoA intermediate that is subsequently hydrolyzed to produce malate and CoA. The protein is Malate synthase (aceB) of Haloferax volcanii (strain ATCC 29605 / DSM 3757 / JCM 8879 / NBRC 14742 / NCIMB 2012 / VKM B-1768 / DS2) (Halobacterium volcanii).